The chain runs to 327 residues: Ran-specific GTPase-activating protein 2 (327 aa).

Disordered regions lie at residues 1–96 (MSET…KKED) and 109–205 (GFGV…KQEV). The segment covering 24–83 (PIDKLDGTPKRPREKDQDEQAEETSDKSEAPNKNDEEKKEEGKKDQEPSHKKIKVDDGKT) has biased composition (basic and acidic residues). Phosphothreonine is present on T31. The segment covering 122–133 (ATTSTESLPASD) has biased composition (polar residues). Residues 140-152 (FAFGSGLSFGSGF) are compositionally biased toward low complexity. Basic and acidic residues-rich tracts occupy residues 157-179 (NKTE…KVHS) and 189-205 (EDTK…KQEV). Residue S179 is modified to Phosphoserine. One can recognise a RanBD1 domain in the interval 191 to 327 (TKDKPKPLKL…YNIIVKSVPK (137 aa)).

In terms of assembly, interacts with GSP1, XPO1 and SRM1.

The protein resides in the nucleus. Its function is as follows. Important for the export of protein containing nuclear export signal (NES) out of the nucleus. Stimulates the GTPase activity of GSP1. The protein is Ran-specific GTPase-activating protein 2 (YRB2) of Saccharomyces cerevisiae (strain ATCC 204508 / S288c) (Baker's yeast).